The sequence spans 141 residues: Large ribosomal subunit protein uL11 (141 aa).

Belongs to the universal ribosomal protein uL11 family. As to quaternary structure, part of the ribosomal stalk of the 50S ribosomal subunit. Interacts with L10 and the large rRNA to form the base of the stalk. L10 forms an elongated spine to which L12 dimers bind in a sequential fashion forming a multimeric L10(L12)X complex. One or more lysine residues are methylated.

In terms of biological role, forms part of the ribosomal stalk which helps the ribosome interact with GTP-bound translation factors. This is Large ribosomal subunit protein uL11 from Streptococcus sanguinis (strain SK36).